A 416-amino-acid chain; its full sequence is Cotranscriptional regulator ARB2A (416 aa).

The N-terminal stretch at 1–18 is a signal peptide; the sequence is MSISLSSLILLPIWINMA. Positions 208–247 are disordered; that stretch reads KPKIHVQSSSDSSDEPAEKRERKDKVSKETKKRRDFYEKY. A compositionally biased stretch (basic and acidic residues) spans 223 to 236; it reads PAEKRERKDKVSKE. The active-site Nucleophile is the S293. A Prevents secretion from ER motif is present at residues 413-416; the sequence is HEEL.

The protein belongs to the ARB2A family. As to quaternary structure, interacts with AGO2. Found in a complex, composed of AGO2, CHD7 and ARB2A.

It is found in the nucleus. Its subcellular location is the cytoplasm. The protein resides in the endoplasmic reticulum. Plays a role in the regulation of alternative splicing, by interacting with AGO2 and CHD7. Seems to be required for stabilizing protein-protein interactions at the chromatin-spliceosome interface. May have hydrolase activity. The sequence is that of Cotranscriptional regulator ARB2A from Homo sapiens (Human).